The chain runs to 569 residues: Arylsulfatase I (569 aa).

Residues 1-23 form the signal peptide; that stretch reads MHTLTGFSLVSLLSFGYLSWDWA. Asp-55, Asp-56, and Cys-93 together coordinate Ca(2+). The active-site Nucleophile is the Cys-93. At Cys-93 the chain carries 3-oxoalanine (Cys). Lys-147 provides a ligand contact to substrate. His-149 is an active-site residue. His-239 is a substrate binding site. N-linked (GlcNAc...) asparagine glycans are attached at residues Asn-276 and Asn-288. Residues Asp-297 and Asn-298 each contribute to the Ca(2+) site. Lys-315 contributes to the substrate binding site. N-linked (GlcNAc...) asparagine glycans are attached at residues Asn-466 and Asn-496. Positions 510–539 are disordered; sequence RAHPDFNGGAWGPWASDEEEEEEEGRARSF.

This sequence belongs to the sulfatase family. Ca(2+) serves as cofactor. Post-translationally, the oxidation of Cys-93 residue to 3-oxoalanine (also known as C(alpha)-formylglycine) by SUMF1/Sulfatase-modifying factor 1, seems critical for catalytic activity. As to expression, expressed in placenta, in embryonic stem cells, fetal eyes and lens.

The protein resides in the secreted. The protein localises to the endoplasmic reticulum. Its function is as follows. Displays arylsulfatase activity at neutral pH, when co-expressed with SUMF1; arylsulfatase activity is measured in the secretion medium of retinal cell line, but no activity is recorded when measured in cell extracts. Lacks arylsulfatase activity. The chain is Arylsulfatase I (ARSI) from Homo sapiens (Human).